Here is a 192-residue protein sequence, read N- to C-terminus: Molybdenum cofactor guanylyltransferase (192 aa).

GTP is bound by residues Lys21, Asp67, and Asp101. A Mg(2+)-binding site is contributed by Asp101.

The protein belongs to the MobA family. Monomer. Mg(2+) serves as cofactor.

Its subcellular location is the cytoplasm. The catalysed reaction is Mo-molybdopterin + GTP + H(+) = Mo-molybdopterin guanine dinucleotide + diphosphate. Its function is as follows. Transfers a GMP moiety from GTP to Mo-molybdopterin (Mo-MPT) cofactor (Moco or molybdenum cofactor) to form Mo-molybdopterin guanine dinucleotide (Mo-MGD) cofactor. The polypeptide is Molybdenum cofactor guanylyltransferase (Neisseria meningitidis serogroup C / serotype 2a (strain ATCC 700532 / DSM 15464 / FAM18)).